Here is a 361-residue protein sequence, read N- to C-terminus: 3-dehydroquinate synthase (361 aa).

It belongs to the archaeal-type DHQ synthase family.

It carries out the reaction 2-amino-2,3,7-trideoxy-D-lyxo-hept-6-ulosonate + NAD(+) + H2O = 3-dehydroquinate + NH4(+) + NADH + H(+). Its function is as follows. Catalyzes the oxidative deamination and cyclization of 2-amino-3,7-dideoxy-D-threo-hept-6-ulosonic acid (ADH) to yield 3-dehydroquinate (DHQ), which is fed into the canonical shikimic pathway of aromatic amino acid biosynthesis. The sequence is that of 3-dehydroquinate synthase from Methanococcus vannielii (strain ATCC 35089 / DSM 1224 / JCM 13029 / OCM 148 / SB).